We begin with the raw amino-acid sequence, 304 residues long: Choline-phosphate cytidylyltransferase 2 (304 aa).

CTP is bound by residues 28–36 and Lys66; that span reads IFDLFHFGH. Residues Lys66 and Trp95 each coordinate substrate. CTP is bound by residues 112–113, Tyr117, and 142–146; these read HD and RTEGI. Residues 266–292 form a disordered region; sequence QNGLTISKDNDDEQMSDDNEFAEEDCV. A compositionally biased stretch (acidic residues) spans 275–291; that stretch reads NDDEQMSDDNEFAEEDC.

The protein belongs to the cytidylyltransferase family.

It carries out the reaction phosphocholine + CTP + H(+) = CDP-choline + diphosphate. It participates in phospholipid metabolism; phosphatidylcholine biosynthesis; phosphatidylcholine from phosphocholine: step 1/2. Its function is as follows. Plays an important role in the biosynthesis of the phospholipid phosphatidylcholine. Catalyzes the formation of CDP-choline. This chain is Choline-phosphate cytidylyltransferase 2, found in Arabidopsis thaliana (Mouse-ear cress).